The sequence spans 1883 residues: DDB1- and CUL4-associated factor homolog 1 (1883 aa).

Disordered regions lie at residues 1 to 47 (MDGQ…QSVE) and 309 to 340 (KPGDDNSVRDDPSRHRLNRSKSRGRGRVHEGA). Over residues 37–47 (NPEEGEEQSVE) the composition is skewed to acidic residues. A compositionally biased stretch (basic and acidic residues) spans 309–322 (KPGDDNSVRDDPSR). A compositionally biased stretch (basic residues) spans 323–334 (HRLNRSKSRGRG). Position 349 is a phosphoserine (Ser349). Residues 882 to 924 (NKPPLAQNHQPVPGQATTRPSTDVAVGTQSTGNAPQTPVAPAS) form a disordered region. The span at 888–917 (QNHQPVPGQATTRPSTDVAVGTQSTGNAPQ) shows a compositional bias: polar residues. The LisH domain occupies 1087 to 1119 (DSKELLLLIHEHLQASGLGDTASALLKEAQLTP). Disordered regions lie at residues 1157-1202 (TSKP…QWPS), 1214-1260 (PKIN…ALPQ), and 1310-1377 (SELR…NPER). Residues 1238-1251 (LTFSPSFSSQSRKQ) are compositionally biased toward low complexity. Over residues 1310–1329 (SELRDSSVPGKRIDLGERRN) the composition is skewed to basic and acidic residues. Residues 1330–1362 (STFADGSGLQTPASALDANQSGSSRLGQMTPAS) are compositionally biased toward polar residues. 5 WD repeats span residues 1464–1503 (DETALFTCIALLGGTNHIAVGSHAGEIKIFEASSGSMLES), 1506–1546 (GHQA…GGPR), 1548–1586 (SFDGCKAAKFSNSGLQFAALSCEASRKDVLLYDVQTCSP), 1587–1626 (CQKLTDTVTSSRSNPYSLVHFSPCDTLILWNGVLWDRRIP), and 1633–1671 (DQFTDYGGGGFHPSRNEVIINSEIWDMRTFKLLRSVPSL). 2 short sequence motifs (DWD box) span residues 1619-1626 (VLWDRRIP) and 1655-1662 (EIWDMRTF). Residues 1763–1883 (YEIGRRRPTD…DDYRDNIRSS (121 aa)) form a disordered region. 2 stretches are compositionally biased toward acidic residues: residues 1773–1796 (DDSDPDDDDETEDEDEDDEEEDDL) and 1808–1864 (DSGD…DGEM).

This sequence belongs to the VPRBP/DCAF1 family. In terms of assembly, component of the CUL4-RBX1-DDB1-DCAF1 E3 ubiquitin-protein ligase complex. Interacts with DDB1A through its DWD motifs. Ubiquitous but predominantly expressed in the inflorescence and roots.

It localises to the nucleus. Its pathway is protein modification; protein ubiquitination. Functionally, component of the CUL4-RBX1-DDB1-DCAF1 E3 ubiquitin-protein ligase complex, DCAF1 may function as the substrate recognition module within this complex. Appears to be required for plant embryogenesis and to affect several other developmental processes including leaf, shoot, and flower development. This chain is DDB1- and CUL4-associated factor homolog 1 (DCAF1), found in Arabidopsis thaliana (Mouse-ear cress).